The sequence spans 544 residues: Protein anon-37Cs (544 aa).

It is found in the cytoplasm. Has a non-vital function. This Drosophila lebanonensis (Fruit fly) protein is Protein anon-37Cs (anon-37Cs).